A 201-amino-acid chain; its full sequence is uncharacterized protein (201 aa).

Coiled-coil stretches lie at residues 3–43 and 76–120; these read YMDD…EVYK and TGQV…AKTK.

This is an uncharacterized protein from Archaeoglobus fulgidus (strain ATCC 49558 / DSM 4304 / JCM 9628 / NBRC 100126 / VC-16).